Reading from the N-terminus, the 315-residue chain is NADH-ubiquinone oxidoreductase chain 1 (315 aa).

8 helical membrane-spanning segments follow: residues 6–26, 80–100, 107–127, 153–173, 177–197, 229–249, 253–273, and 292–312; these read FILS…SVAF, ISPI…PFFV, LGGL…MIAG, LALI…MYFF, IYIW…TISL, LIFM…CVIF, DVFN…FIWA, and CFLS…ILLF.

This sequence belongs to the complex I subunit 1 family.

Its subcellular location is the mitochondrion inner membrane. It carries out the reaction a ubiquinone + NADH + 5 H(+)(in) = a ubiquinol + NAD(+) + 4 H(+)(out). Its function is as follows. Core subunit of the mitochondrial membrane respiratory chain NADH dehydrogenase (Complex I) that is believed to belong to the minimal assembly required for catalysis. Complex I functions in the transfer of electrons from NADH to the respiratory chain. The immediate electron acceptor for the enzyme is believed to be ubiquinone. This Drosophila persimilis (Fruit fly) protein is NADH-ubiquinone oxidoreductase chain 1 (mt:ND1).